Consider the following 451-residue polypeptide: Tubulin beta chain (451 aa).

GTP contacts are provided by Q11, E69, S138, G142, T143, G144, N204, and N226. Residue E69 participates in Mg(2+) binding. The interval 426 to 451 (QDATAEEEGEFDENEGAEGEEQPADY) is disordered. A compositionally biased stretch (acidic residues) spans 429 to 451 (TAEEEGEFDENEGAEGEEQPADY).

It belongs to the tubulin family. In terms of assembly, dimer of alpha and beta chains. A typical microtubule is a hollow water-filled tube with an outer diameter of 25 nm and an inner diameter of 15 nM. Alpha-beta heterodimers associate head-to-tail to form protofilaments running lengthwise along the microtubule wall with the beta-tubulin subunit facing the microtubule plus end conferring a structural polarity. Microtubules usually have 13 protofilaments but different protofilament numbers can be found in some organisms and specialized cells. The cofactor is Mg(2+).

It localises to the cytoplasm. The protein localises to the cytoskeleton. In terms of biological role, tubulin is the major constituent of microtubules, a cylinder consisting of laterally associated linear protofilaments composed of alpha- and beta-tubulin heterodimers. Microtubules grow by the addition of GTP-tubulin dimers to the microtubule end, where a stabilizing cap forms. Below the cap, tubulin dimers are in GDP-bound state, owing to GTPase activity of alpha-tubulin. This Naegleria pringsheimi (Amoeba) protein is Tubulin beta chain.